Reading from the N-terminus, the 444-residue chain is Nuclear envelope integral membrane protein 1 (444 aa).

The first 43 residues, 1 to 43, serve as a signal peptide directing secretion; the sequence is MAGGMKVAVSPAVGPGPWGSGVGGGGTVRLLLILSGCLVYGTA. The N-linked (GlcNAc...) asparagine glycan is linked to Asn-125. 5 consecutive transmembrane segments (helical) span residues 161–181, 186–206, 216–236, 245–265, and 289–309; these read PKLF…DLLS, FYYS…IIFI, PIYV…QLVF, CYWQ…FAVC, and LCFM…IIIA. An a; required for its colocalization with lamins at the nuclear envelope region spans residues 186-297; sequence FYYSTGMTVG…GLCFMYSGIQ (112 aa). A b; required for interaction with RAN-GTP region spans residues 336 to 405; that stretch reads PVPPRLLTEE…LTPNEVSVHE (70 aa). The segment at 336–444 is required for nuclear localization; that stretch reads PVPPRLLTEE…PAITQNNFLT (109 aa). A phosphoserine mark is found at Ser-368, Ser-424, and Ser-425.

It belongs to the NEMP family. As to quaternary structure, homooligomer. Interacts with RAN-GTP. Interacts with EMD. Post-translationally, phosphorylation may regulate its interaction with RAN-GTP.

The protein resides in the nucleus inner membrane. It is found in the nucleus envelope. Functionally, together with EMD, contributes to nuclear envelope stiffness in germ cells. Required for female fertility. Essential for normal erythropoiesis. Required for efficient nuclear envelope opening and enucleation during the late stages of erythroblast maturation. The sequence is that of Nuclear envelope integral membrane protein 1 (NEMP1) from Homo sapiens (Human).